A 407-amino-acid polypeptide reads, in one-letter code: Betaine--homocysteine S-methyltransferase 1 (407 aa).

The Hcy-binding domain occupies K11 to L314. N6-succinyllysine occurs at positions 40, 93, and 98. C217 is a binding site for Zn(2+). N6-succinyllysine occurs at positions 232 and 241. Residues C299 and C300 each contribute to the Zn(2+) site. S330 bears the Phosphoserine mark. K340 and K377 each carry N6-succinyllysine.

As to quaternary structure, homotetramer. Zn(2+) serves as cofactor.

It is found in the cytoplasm. The protein resides in the cytosol. The protein localises to the nucleus. It catalyses the reaction L-homocysteine + glycine betaine = N,N-dimethylglycine + L-methionine. The protein operates within amine and polyamine degradation; betaine degradation; sarcosine from betaine: step 1/2. It functions in the pathway amino-acid biosynthesis; L-methionine biosynthesis via de novo pathway; L-methionine from L-homocysteine (BhmT route): step 1/1. In terms of biological role, involved in the regulation of homocysteine metabolism. Converts betaine and homocysteine to dimethylglycine and methionine, respectively. This reaction is also required for the irreversible oxidation of choline. This chain is Betaine--homocysteine S-methyltransferase 1 (BHMT), found in Bos taurus (Bovine).